Here is a 145-residue protein sequence, read N- to C-terminus: Small ribosomal subunit protein uS12A (145 aa).

At Pro-64 the chain carries Hydroxyproline.

This sequence belongs to the universal ribosomal protein uS12 family.

The chain is Small ribosomal subunit protein uS12A (RPS23A) from Naumovozyma castellii (Yeast).